A 117-amino-acid polypeptide reads, in one-letter code: Iron-sulfur cluster insertion protein ErpA (117 aa).

Cys45, Cys109, and Cys111 together coordinate iron-sulfur cluster.

Belongs to the HesB/IscA family. As to quaternary structure, homodimer. Iron-sulfur cluster is required as a cofactor.

Required for insertion of 4Fe-4S clusters for at least IspG. The polypeptide is Iron-sulfur cluster insertion protein ErpA (Hahella chejuensis (strain KCTC 2396)).